The primary structure comprises 1006 residues: Phosphatidylinositol-3,5-bisphosphate 3-phosphatase MTMR3 (1006 aa).

The segment covering 1–10 has biased composition (low complexity); sequence MTVTSSAAID. Positions 1-29 are disordered; sequence MTVTSSAAIDIGGGGGGRRSDRLDSDRTS. Over residues 18–29 the composition is skewed to basic and acidic residues; sequence RRSDRLDSDRTS. Residues 224 to 630 form the Myotubularin phosphatase domain; sequence AWKFSEAVDE…INLRVWHEVF (407 aa). The a 1,2-diacyl-sn-glycero-3-phospho-(1D-myo-inositol-3,5-bisphosphate) site is built by asparagine 377, asparagine 402, and isoleucine 403. Positions 377, 402, and 403 each coordinate a 1,2-diacyl-sn-glycero-3-phospho-(1D-myo-inositol-3-phosphate). The active-site Phosphocysteine intermediate is the cysteine 463. A 1,2-diacyl-sn-glycero-3-phospho-(1D-myo-inositol-3,5-bisphosphate) contacts are provided by serine 464, aspartate 465, glycine 466, tryptophan 467, aspartate 468, arginine 469, lysine 505, and arginine 509. Residues serine 464, aspartate 465, glycine 466, tryptophan 467, aspartate 468, and arginine 469 each contribute to the a 1,2-diacyl-sn-glycero-3-phospho-(1D-myo-inositol-3-phosphate) site. Arginine 509 is an a 1,2-diacyl-sn-glycero-3-phospho-(1D-myo-inositol-3-phosphate) binding site. Positions 641-705 are disordered; it reads FSPKEERPLS…PSDNTNSLPM (65 aa). Residues 651 to 705 are compositionally biased toward polar residues; it reads GCTTPMNTSTSTNLVKSKSSESINSLNVDGSAKESSQQHPTCSTTPSDNTNSLPM. Residues 818–883 form an FYVE-type zinc finger; it reads EGESGHCAYC…ACDSCYDSMH (66 aa). Zn(2+)-binding residues include cysteine 824, cysteine 827, cysteine 845, cysteine 848, cysteine 853, cysteine 856, cysteine 875, and cysteine 878. Residues 886–1006 form a disordered region; sequence DLKLSSSSTT…DVLDVNEQPL (121 aa). Low complexity-rich tracts occupy residues 890–901 and 913–926; these read SSSSTTTTSSST and DNNS…VSEN. Composition is skewed to basic and acidic residues over residues 933-954 and 976-985; these read VEEK…ETKC and HSRDPLKSID.

Belongs to the protein-tyrosine phosphatase family. Non-receptor class myotubularin subfamily. Expressed in the body wall muscle and in eggs. Expressed in head neurons. Expressed in the intestine. Expressed in pharyngeal cells, vulval muscle cells and cells of the tail region.

The protein localises to the cytoplasm. Its subcellular location is the membrane. The enzyme catalyses a 1,2-diacyl-sn-glycero-3-phospho-(1D-myo-inositol-3,5-bisphosphate) + H2O = a 1,2-diacyl-sn-glycero-3-phospho-(1D-myo-inositol-5-phosphate) + phosphate. It catalyses the reaction a 1,2-diacyl-sn-glycero-3-phospho-(1D-myo-inositol-3-phosphate) + H2O = a 1,2-diacyl-sn-glycero-3-phospho-(1D-myo-inositol) + phosphate. It carries out the reaction 1,2-dihexadecanoyl-sn-glycero-3-phospho-(1D-myo-inositol-3-phosphate) + H2O = 1,2-dihexadecanoyl-sn-glycero-3-phospho-(1D-myo-inositol) + phosphate. The catalysed reaction is 1,2-dihexadecanoyl-sn-glycero-3-phospho-(1D-myo-inositol-3,5-phosphate) + H2O = 1,2-dihexadecanoyl-sn-glycero-3-phospho-(1D-myo-inositol-5-phosphate) + phosphate. The enzyme catalyses 1,2-dioctanoyl-sn-glycero-3-phospho-(1-D-myo-inositol-3-phosphate) + H2O = 1,2-dioctanoyl-sn-glycero-3-phospho-(1D-myo-inositol) + phosphate. With respect to regulation, inhibited by sodium vanadate and peroxide. In terms of biological role, preferentially dephosphorylates phosphatidylinositol 3-phosphate (PI3P), and has some activity towards phosphatidylinositol 3,5-bisphosphate (PI35P). Positively regulates autophagy and is recruited to autophagosomes by PI3P where it catalyzes PI3P turnover to promote autophagosome maturation. Thought to have a role in maintenance of muscle function. Involved in locomotion and lifespan determination. This is Phosphatidylinositol-3,5-bisphosphate 3-phosphatase MTMR3 from Caenorhabditis elegans.